A 92-amino-acid polypeptide reads, in one-letter code: Putative transition state regulator Abh (92 aa).

The 46-residue stretch at 5–50 (GVVRKVDELGRIVMPIELRRALDIAIKDSIEFFVDGDKIILKKYKP) folds into the SpoVT-AbrB domain.

It to B.subtilis AbrB and SpoVT.

The chain is Putative transition state regulator Abh (abh) from Bacillus subtilis (strain 168).